Here is a 633-residue protein sequence, read N- to C-terminus: Chaperone protein DnaK (633 aa).

The residue at position 196 (Thr196) is a Phosphothreonine; by autocatalysis. The tract at residues 594-633 (NLYGQPGAEPQPETNGHAGGSKGGDGAVNAEYEVIDGDDK) is disordered. The span at 610 to 619 (HAGGSKGGDG) shows a compositional bias: gly residues.

It belongs to the heat shock protein 70 family.

Its function is as follows. Acts as a chaperone. The protein is Chaperone protein DnaK of Chlorobaculum tepidum (strain ATCC 49652 / DSM 12025 / NBRC 103806 / TLS) (Chlorobium tepidum).